The primary structure comprises 328 residues: Tetraacyldisaccharide 4'-kinase (328 aa).

55–62 (TAGGNGKT) contributes to the ATP binding site.

The protein belongs to the LpxK family.

The enzyme catalyses a lipid A disaccharide + ATP = a lipid IVA + ADP + H(+). It functions in the pathway glycolipid biosynthesis; lipid IV(A) biosynthesis; lipid IV(A) from (3R)-3-hydroxytetradecanoyl-[acyl-carrier-protein] and UDP-N-acetyl-alpha-D-glucosamine: step 6/6. Transfers the gamma-phosphate of ATP to the 4'-position of a tetraacyldisaccharide 1-phosphate intermediate (termed DS-1-P) to form tetraacyldisaccharide 1,4'-bis-phosphate (lipid IVA). This chain is Tetraacyldisaccharide 4'-kinase, found in Escherichia coli O127:H6 (strain E2348/69 / EPEC).